The sequence spans 376 residues: Phytanoyl-CoA hydroxylase interacting protein-like (376 aa).

A phosphoserine mark is found at S12 and S15. N23 carries an N-linked (GlcNAc...) asparagine glycan. Residue S25 is modified to Phosphoserine. N37 carries N-linked (GlcNAc...) asparagine glycosylation. One can recognise a Fibronectin type-III domain in the interval 52 to 161; that stretch reads VPRNIKISNI…EIIEFCTADY (110 aa).

This sequence belongs to the PHYHIP family.

May play a role in the development of the central system. The protein is Phytanoyl-CoA hydroxylase interacting protein-like (PHYHIPL) of Bos taurus (Bovine).